The following is a 229-amino-acid chain: Uracil-DNA glycosylase (229 aa).

The active-site Proton acceptor is aspartate 64.

The protein belongs to the uracil-DNA glycosylase (UDG) superfamily. UNG family.

The protein resides in the cytoplasm. The catalysed reaction is Hydrolyzes single-stranded DNA or mismatched double-stranded DNA and polynucleotides, releasing free uracil.. In terms of biological role, excises uracil residues from the DNA which can arise as a result of misincorporation of dUMP residues by DNA polymerase or due to deamination of cytosine. This Shigella flexneri serotype 5b (strain 8401) protein is Uracil-DNA glycosylase.